The chain runs to 337 residues: MWLLYLILGSVESQLLPGNNHTTECNIPGNFMCSNGRCIPGGWQCDGNPDCFDESDEKECPRARSRCGPNFFPCTSGIHCIIARFQCNGFEDCPDGSDEENCTAHPLLCSNSRFHCKNHLCIDKSFVCDGQNNCLDNSDEEHCHSPQEPGSEQDYVSSENQLLYYPSITYTIIGSSVIFVLVVALLALVLHHQRKRNLMSLPVHRLQHPLLLSRLVVLDHPHHCRVTYNVNNGIQYMSGQGYQQPVSVESPPSYTEAVLDHSSRPPWFDLPPPPYPSDMESVSQTELPPYRSRTGSSASAGSTEHPRGTPCGTESPTEPQDPTAAPSDDLPSTEVDV.

Residues 1 to 13 form the signal peptide; the sequence is MWLLYLILGSVES. Residues 14 to 169 lie on the Extracellular side of the membrane; that stretch reads QLLPGNNHTT…NQLLYYPSIT (156 aa). An N-linked (GlcNAc...) asparagine glycan is attached at Asn20. LDL-receptor class A domains follow at residues 24–61, 66–103, and 108–144; these read ECNI…KECP, RCGP…ENCT, and LCSN…EHCH. Cystine bridges form between Cys25–Cys38, Cys33–Cys51, Cys45–Cys60, Cys67–Cys80, Cys74–Cys93, Cys87–Cys102, Cys109–Cys121, Cys116–Cys134, and Cys128–Cys143. N-linked (GlcNAc...) asparagine glycosylation occurs at Asn101. The helical transmembrane segment at 170 to 190 threads the bilayer; sequence YTIIGSSVIFVLVVALLALVL. Topologically, residues 191–337 are cytoplasmic; that stretch reads HHQRKRNLMS…DDLPSTEVDV (147 aa). A compositionally biased stretch (polar residues) spans 243-253; that stretch reads QQPVSVESPPS. The disordered stretch occupies residues 243–337; it reads QQPVSVESPP…DDLPSTEVDV (95 aa). The segment covering 291-303 has biased composition (low complexity); the sequence is RSRTGSSASAGST.

Belongs to the LDLR family.

The protein resides in the cell membrane. This Xenopus tropicalis (Western clawed frog) protein is Low-density lipoprotein receptor class A domain-containing protein 3.